The sequence spans 506 residues: UDP-N-acetylmuramoylalanine--D-glutamate ligase (506 aa).

128–134 is a binding site for ATP; it reads GTNGKTT.

Belongs to the MurCDEF family.

It localises to the cytoplasm. The enzyme catalyses UDP-N-acetyl-alpha-D-muramoyl-L-alanine + D-glutamate + ATP = UDP-N-acetyl-alpha-D-muramoyl-L-alanyl-D-glutamate + ADP + phosphate + H(+). The protein operates within cell wall biogenesis; peptidoglycan biosynthesis. Its function is as follows. Cell wall formation. Catalyzes the addition of glutamate to the nucleotide precursor UDP-N-acetylmuramoyl-L-alanine (UMA). The chain is UDP-N-acetylmuramoylalanine--D-glutamate ligase from Albidiferax ferrireducens (strain ATCC BAA-621 / DSM 15236 / T118) (Rhodoferax ferrireducens).